Reading from the N-terminus, the 535-residue chain is Sodium/hydrogen exchanger 1 (535 aa).

Topologically, residues Met1 to Ser21 are cytoplasmic. The helical transmembrane segment at Val22–Leu42 threads the bilayer. Residues Glu43 to Arg46 lie on the Vacuolar side of the membrane. A helical transmembrane segment spans residues Trp47–Leu67. Topologically, residues Met68–His75 are cytoplasmic. The helical transmembrane segment at Leu76 to Ala96 threads the bilayer. Over Gly97 to Leu114 the chain is Vacuolar. Residues Phe115 to Phe135 form a helical membrane-spanning segment. Residues Ser136 to Arg137 are Cytoplasmic-facing. Residues Met138–Thr158 form a helical membrane-spanning segment. The Vacuolar portion of the chain corresponds to Asp159–Pro173. The chain crosses the membrane as a helical span at residues Phe174–Phe194. The Cytoplasmic portion of the chain corresponds to Asn195–Phe218. Residues Tyr219 to Ile239 form a helical membrane-spanning segment. Residues Lys240–Tyr264 are Vacuolar-facing. The helical transmembrane segment at Met265 to Met285 threads the bilayer. The Cytoplasmic portion of the chain corresponds to Ser286 to Ala304. Residues Phe305–Leu325 traverse the membrane as a helical segment. The Vacuolar portion of the chain corresponds to Asp326–Ser344. The helical transmembrane segment at Ser345–Leu365 threads the bilayer. At Ser366–Gln381 the chain is on the cytoplasmic side. A helical membrane pass occupies residues Gln382–Asn402. The Vacuolar segment spans residues Lys403–Asn415. A helical membrane pass occupies residues Ala416–Met436. At Thr437–Arg535 the chain is on the cytoplasmic side. Residues Val452–Thr478 are disordered. Over residues Ser454–Ser469 the composition is skewed to low complexity.

This sequence belongs to the monovalent cation:proton antiporter 1 (CPA1) transporter (TC 2.A.36) family.

Its subcellular location is the vacuole membrane. The enzyme catalyses Na(+)(in) + H(+)(out) = Na(+)(out) + H(+)(in). The catalysed reaction is K(+)(in) + H(+)(out) = K(+)(out) + H(+)(in). Functionally, vacuolar antiporter that acts in low affinity electroneutral exchange of protons H(+) for cations such as Na(+) or K(+) across membranes. Plays important roles in the transport of Na(+) and K(+) accumulated in the cytoplasm into vacuoles, and is involved in salt stress tolerance. The polypeptide is Sodium/hydrogen exchanger 1 (Oryza sativa subsp. japonica (Rice)).